The chain runs to 160 residues: Transcriptional regulator MraZ (160 aa).

2 SpoVT-AbrB domains span residues 5–50 (KFET…EGVY) and 93–136 (AIEC…SQAE).

This sequence belongs to the MraZ family. Forms oligomers.

Its subcellular location is the cytoplasm. It is found in the nucleoid. The chain is Transcriptional regulator MraZ from Geotalea uraniireducens (strain Rf4) (Geobacter uraniireducens).